A 282-amino-acid polypeptide reads, in one-letter code: MPELPEVETVRRGLTQQTLQRVCTGGEVLLSRTIATPTPELFLVALQQTQIQEWRRRGKYLLADLSREGEPAGTWGVHLRMTGQFFWTEPATPLTKHTRVRLRFEGDRELRFIDIRSFGQMWWVPPDRPVESVITGLSKLGPEPFAPEFTARYLRDRLRRSQRPIKTALLDQSLVAGIGNIYADESLFRTGIHPTTPSDRLTKIQAEKLREAIVEVLTASIGAGGTTFSDFRDLTGVNGNYGGQAWVYGRKDQPCRTCGTPIQKLKLAGRSSHFCPRCQPCS.

The active-site Schiff-base intermediate with DNA is P2. The active-site Proton donor is E3. The Proton donor; for beta-elimination activity role is filled by K59. Residues H97 and R116 each contribute to the DNA site. Residues 246 to 280 form an FPG-type zinc finger; sequence WVYGRKDQPCRTCGTPIQKLKLAGRSSHFCPRCQP. R270 functions as the Proton donor; for delta-elimination activity in the catalytic mechanism.

Belongs to the FPG family. Monomer. Requires Zn(2+) as cofactor.

The enzyme catalyses Hydrolysis of DNA containing ring-opened 7-methylguanine residues, releasing 2,6-diamino-4-hydroxy-5-(N-methyl)formamidopyrimidine.. It catalyses the reaction 2'-deoxyribonucleotide-(2'-deoxyribose 5'-phosphate)-2'-deoxyribonucleotide-DNA = a 3'-end 2'-deoxyribonucleotide-(2,3-dehydro-2,3-deoxyribose 5'-phosphate)-DNA + a 5'-end 5'-phospho-2'-deoxyribonucleoside-DNA + H(+). Involved in base excision repair of DNA damaged by oxidation or by mutagenic agents. Acts as a DNA glycosylase that recognizes and removes damaged bases. Has a preference for oxidized purines, such as 7,8-dihydro-8-oxoguanine (8-oxoG). Has AP (apurinic/apyrimidinic) lyase activity and introduces nicks in the DNA strand. Cleaves the DNA backbone by beta-delta elimination to generate a single-strand break at the site of the removed base with both 3'- and 5'-phosphates. The protein is Formamidopyrimidine-DNA glycosylase (mutM) of Synechococcus sp. (strain ATCC 27144 / PCC 6301 / SAUG 1402/1) (Anacystis nidulans).